The primary structure comprises 89 residues: Small ribosomal subunit protein uS15 (89 aa).

Belongs to the universal ribosomal protein uS15 family. As to quaternary structure, part of the 30S ribosomal subunit. Forms a bridge to the 50S subunit in the 70S ribosome, contacting the 23S rRNA.

Functionally, one of the primary rRNA binding proteins, it binds directly to 16S rRNA where it helps nucleate assembly of the platform of the 30S subunit by binding and bridging several RNA helices of the 16S rRNA. Forms an intersubunit bridge (bridge B4) with the 23S rRNA of the 50S subunit in the ribosome. This Yersinia enterocolitica serotype O:8 / biotype 1B (strain NCTC 13174 / 8081) protein is Small ribosomal subunit protein uS15.